The following is a 347-amino-acid chain: MKDENSINFLSSNESYLYDKSENELRPKVFEDFKGQVNVKETLSIFIRASKERGEALDHVFLSGPPGLGKTTLASIIAFEMNASIKITSAPAFDKPKDIIGILTGLDEKSILFIDEIHRLRPIIEEMLCIAMEDYELDWVIGQGANARTVRMPLPKFTLIGATTKPGKVTSPLYARFGITARFELYSEIELVEIIKRNSIILNIEIEEDAAFLLARSSRGTPRIANRLLRRIRDIAQVTGSLVVTSDIVSIGLEMLRIDGEGLDEQDRNILRSLILKFNGGPVGVDTLAISVGETADSLEDFYEPYLIMKGFINRTHRGRKATEFAYLHLNLEMKEEDISENQRVSF.

The tract at residues 1 to 186 (MKDENSINFL…FGITARFELY (186 aa)) is large ATPase domain (RuvB-L). ATP contacts are provided by residues Leu25, Arg26, Gly67, Lys70, Thr71, Thr72, 133–135 (EDY), Arg176, Tyr186, and Arg223. Residue Thr71 coordinates Mg(2+). A small ATPAse domain (RuvB-S) region spans residues 187–257 (SEIELVEIIK…IVSIGLEMLR (71 aa)). The segment at 260–347 (GEGLDEQDRN…DISENQRVSF (88 aa)) is head domain (RuvB-H). DNA contacts are provided by Arg315 and Arg320.

Belongs to the RuvB family. In terms of assembly, homohexamer. Forms an RuvA(8)-RuvB(12)-Holliday junction (HJ) complex. HJ DNA is sandwiched between 2 RuvA tetramers; dsDNA enters through RuvA and exits via RuvB. An RuvB hexamer assembles on each DNA strand where it exits the tetramer. Each RuvB hexamer is contacted by two RuvA subunits (via domain III) on 2 adjacent RuvB subunits; this complex drives branch migration. In the full resolvosome a probable DNA-RuvA(4)-RuvB(12)-RuvC(2) complex forms which resolves the HJ.

It is found in the cytoplasm. It catalyses the reaction ATP + H2O = ADP + phosphate + H(+). Functionally, the RuvA-RuvB-RuvC complex processes Holliday junction (HJ) DNA during genetic recombination and DNA repair, while the RuvA-RuvB complex plays an important role in the rescue of blocked DNA replication forks via replication fork reversal (RFR). RuvA specifically binds to HJ cruciform DNA, conferring on it an open structure. The RuvB hexamer acts as an ATP-dependent pump, pulling dsDNA into and through the RuvAB complex. RuvB forms 2 homohexamers on either side of HJ DNA bound by 1 or 2 RuvA tetramers; 4 subunits per hexamer contact DNA at a time. Coordinated motions by a converter formed by DNA-disengaged RuvB subunits stimulates ATP hydrolysis and nucleotide exchange. Immobilization of the converter enables RuvB to convert the ATP-contained energy into a lever motion, pulling 2 nucleotides of DNA out of the RuvA tetramer per ATP hydrolyzed, thus driving DNA branch migration. The RuvB motors rotate together with the DNA substrate, which together with the progressing nucleotide cycle form the mechanistic basis for DNA recombination by continuous HJ branch migration. Branch migration allows RuvC to scan DNA until it finds its consensus sequence, where it cleaves and resolves cruciform DNA. The polypeptide is Holliday junction branch migration complex subunit RuvB (Borrelia garinii subsp. bavariensis (strain ATCC BAA-2496 / DSM 23469 / PBi) (Borreliella bavariensis)).